The following is a 266-amino-acid chain: MNAPENIFLPDVQAAADTRRLAIQSVGVKGLRYPLQLENAAGELTSTVATFAMSVGLPPEVKGTHMSRFVELLEARTGPLTQVGLLRMMADMLLRLDASSGRIELAFPYFIRKMAPVSGVESLLDYDATLIVDQRAWESATLTLRVVAPVTSLCPCSKKISDYGAHNQRSHITLEARLRSPMSIEDLVRIAEEEASCEVFGLLKRPDEKWVTERAYDNPKFVEDLVRDIALRLMNEPRIAEWKVASENFESIHNHSAYAELYGCNE.

Belongs to the GTP cyclohydrolase IV family.

The catalysed reaction is GTP + H2O = 7,8-dihydroneopterin 3'-triphosphate + formate + H(+). It participates in cofactor biosynthesis; 7,8-dihydroneopterin triphosphate biosynthesis; 7,8-dihydroneopterin triphosphate from GTP: step 1/1. Its function is as follows. Converts GTP to 7,8-dihydroneopterin triphosphate. The sequence is that of GTP cyclohydrolase FolE2 1 from Dechloromonas aromatica (strain RCB).